The following is a 212-amino-acid chain: Thymidylate kinase (212 aa).

Glycine 10–serine 17 contributes to the ATP binding site.

The protein belongs to the thymidylate kinase family.

The enzyme catalyses dTMP + ATP = dTDP + ADP. Its function is as follows. Phosphorylation of dTMP to form dTDP in both de novo and salvage pathways of dTTP synthesis. In Lactobacillus helveticus (strain DPC 4571), this protein is Thymidylate kinase.